The chain runs to 356 residues: Peptide chain release factor 1 (356 aa).

Gln233 is subject to N5-methylglutamine.

The protein belongs to the prokaryotic/mitochondrial release factor family. Methylated by PrmC. Methylation increases the termination efficiency of RF1.

The protein resides in the cytoplasm. Peptide chain release factor 1 directs the termination of translation in response to the peptide chain termination codons UAG and UAA. This is Peptide chain release factor 1 from Endomicrobium trichonymphae.